Here is a 132-residue protein sequence, read N- to C-terminus: Small ribosomal subunit protein eS24 (132 aa).

Residues 90 to 100 (RLAKHGLYEKK) are compositionally biased toward basic and acidic residues. A disordered region spans residues 90-132 (RLAKHGLYEKKKTSRKQRKERKNRMKKVRGTAKANVGAGKKKD). A compositionally biased stretch (basic residues) spans 101-119 (KTSRKQRKERKNRMKKVRG).

It belongs to the eukaryotic ribosomal protein eS24 family. As to quaternary structure, component of the small ribosomal subunit. Part of the small subunit (SSU) processome, composed of more than 70 proteins and the RNA chaperone small nucleolar RNA (snoRNA) U3.

Its subcellular location is the cytoplasm. The protein localises to the nucleus. It localises to the nucleolus. Its function is as follows. Component of the small ribosomal subunit. The ribosome is a large ribonucleoprotein complex responsible for the synthesis of proteins in the cell. Required for processing of pre-rRNA and maturation of 40S ribosomal subunits. Part of the small subunit (SSU) processome, first precursor of the small eukaryotic ribosomal subunit. During the assembly of the SSU processome in the nucleolus, many ribosome biogenesis factors, an RNA chaperone and ribosomal proteins associate with the nascent pre-rRNA and work in concert to generate RNA folding, modifications, rearrangements and cleavage as well as targeted degradation of pre-ribosomal RNA by the RNA exosome. In Xenopus laevis (African clawed frog), this protein is Small ribosomal subunit protein eS24 (rps24).